Here is a 424-residue protein sequence, read N- to C-terminus: Galacturonokinase (424 aa).

Residue Ser2 is modified to N-acetylserine. 146–155 (DSSGLSSSAA) lines the ATP pocket. The active-site Proton acceptor is the Asp197.

This sequence belongs to the GHMP kinase family. The cofactor is Mg(2+). Mn(2+) is required as a cofactor. It depends on Ca(2+) as a cofactor. As to expression, expressed in roots, stems, leaves, flowers and young siliques. Higher expression in the elongating middle stem region than in the lower or upper stem region.

It carries out the reaction D-galacturonate + ATP = 1-phospho-alpha-D-galacturonate + ADP + H(+). Inhibited by EDTA and ADP. Functionally, sugar-1-kinase with a strict substrate specificity for the alpha-anomeric configuration of D-galacturonic acid (D-GalA) and ATP. Involved in the biosynthesis of UDP-galacturonic acid (UDP-GalA) from the salvaged GalA that is released during growth-dependent cell wall restructuring. The polypeptide is Galacturonokinase (GALAK) (Arabidopsis thaliana (Mouse-ear cress)).